A 235-amino-acid polypeptide reads, in one-letter code: Small ribosomal subunit protein uS3 (235 aa).

Residues 39–107 (IRTYIENELK…ETHLNIVEVR (69 aa)) enclose the KH type-2 domain. The interval 215 to 235 (SERRAVEGAGDGGGQRRRENA) is disordered.

Belongs to the universal ribosomal protein uS3 family. As to quaternary structure, part of the 30S ribosomal subunit. Forms a tight complex with proteins S10 and S14.

Binds the lower part of the 30S subunit head. Binds mRNA in the 70S ribosome, positioning it for translation. This is Small ribosomal subunit protein uS3 from Chelativorans sp. (strain BNC1).